A 383-amino-acid chain; its full sequence is Succinyl-diaminopimelate desuccinylase (383 aa).

His-73 contacts Zn(2+). Residue Asp-75 is part of the active site. Asp-107 serves as a coordination point for Zn(2+). Glu-141 serves as the catalytic Proton acceptor. Residues Glu-142, Glu-170, and His-356 each coordinate Zn(2+).

This sequence belongs to the peptidase M20A family. DapE subfamily. As to quaternary structure, homodimer. Zn(2+) serves as cofactor. Co(2+) is required as a cofactor.

It carries out the reaction N-succinyl-(2S,6S)-2,6-diaminopimelate + H2O = (2S,6S)-2,6-diaminopimelate + succinate. The protein operates within amino-acid biosynthesis; L-lysine biosynthesis via DAP pathway; LL-2,6-diaminopimelate from (S)-tetrahydrodipicolinate (succinylase route): step 3/3. Its function is as follows. Catalyzes the hydrolysis of N-succinyl-L,L-diaminopimelic acid (SDAP), forming succinate and LL-2,6-diaminopimelate (DAP), an intermediate involved in the bacterial biosynthesis of lysine and meso-diaminopimelic acid, an essential component of bacterial cell walls. The protein is Succinyl-diaminopimelate desuccinylase of Pseudomonas putida (strain GB-1).